A 192-amino-acid polypeptide reads, in one-letter code: Peptidyl-tRNA hydrolase (192 aa).

Tyr-14 serves as a coordination point for tRNA. His-19 functions as the Proton acceptor in the catalytic mechanism. TRNA contacts are provided by Tyr-66 and Asn-68.

The protein belongs to the PTH family. Monomer.

The protein resides in the cytoplasm. It carries out the reaction an N-acyl-L-alpha-aminoacyl-tRNA + H2O = an N-acyl-L-amino acid + a tRNA + H(+). Hydrolyzes ribosome-free peptidyl-tRNAs (with 1 or more amino acids incorporated), which drop off the ribosome during protein synthesis, or as a result of ribosome stalling. Functionally, catalyzes the release of premature peptidyl moieties from peptidyl-tRNA molecules trapped in stalled 50S ribosomal subunits, and thus maintains levels of free tRNAs and 50S ribosomes. The sequence is that of Peptidyl-tRNA hydrolase from Coprothermobacter proteolyticus (strain ATCC 35245 / DSM 5265 / OCM 4 / BT).